The following is a 36-amino-acid chain: MSDIN-like toxin proprotein 10 (36 aa).

A propeptide spanning residues 1–10 (MSDINATRLP) is cleaved from the precursor. A cross-link (cyclopeptide (Gly-Pro)) is located at residues 11-19 (GAYPPVPMP). A propeptide spanning residues 20-36 (CVGDADNFTLTRGENLC) is cleaved from the precursor.

It belongs to the MSDIN fungal toxin family. In terms of processing, processed by the macrocyclase-peptidase enzyme POPB to yield a toxic cyclic nonapeptide. POPB first removes 10 residues from the N-terminus. Conformational trapping of the remaining peptide forces the enzyme to release this intermediate rather than proceed to macrocyclization. The enzyme rebinds the remaining peptide in a different conformation and catalyzes macrocyclization of the N-terminal 9 residues.

Its function is as follows. Probable toxin that belongs to the MSDIN-like toxin family responsible for a large number of food poisoning cases and deaths. This Amanita bisporigera (Destroying angel) protein is MSDIN-like toxin proprotein 10.